A 186-amino-acid chain; its full sequence is Mating-type-like protein ALPHA2 (186 aa).

The homeobox; TALE-type DNA-binding region spans 112–174 (KKIKSRRLTK…NRRRKEKNTK (63 aa)).

It belongs to the TALE/M-ATYP homeobox family. As to quaternary structure, forms a heterodimer with A1.

The protein resides in the nucleus. Mating type proteins are sequence specific DNA-binding proteins that act as master switches in yeast differentiation by controlling gene expression in a cell type-specific fashion. Transcriptional corepressor that acts in conjunction with A1 to repress transcription both of homozygote-specific genes and of genes necessary for the white-opaque switch, a prerequisite for mating. This is Mating-type-like protein ALPHA2 (MTLALPHA2) from Candida albicans (strain SC5314 / ATCC MYA-2876) (Yeast).